We begin with the raw amino-acid sequence, 512 residues long: Pantothenate transporter FEN2 (512 aa).

Topologically, residues 1-27 (MMKESKSITQHEVERESVSSKRAIKKR) are cytoplasmic. A helical membrane pass occupies residues 28–48 (LLLFKIDLFVLSFVCLQYWIN). Residues 49 to 79 (YVDRVGFTNAYISGMKEDLKMVGNDLTVSNT) lie on the Extracellular side of the membrane. The helical transmembrane segment at 80-100 (VFMIGYIVGMVPNNLMLLCVP) threads the bilayer. The Cytoplasmic portion of the chain corresponds to 101 to 102 (PR). A helical transmembrane segment spans residues 103–123 (IWLSFCTFAWGLLTLGMYKVT). Topologically, residues 124-132 (SFKHICAIR) are extracellular. Residues 133–153 (FFQALFESCTFSGTHFVLGSW) form a helical membrane-spanning segment. The Cytoplasmic segment spans residues 154–164 (YKEDELPIRSA). Residues 165-185 (IFTGSGLVGSMFSGFMQTSIF) traverse the membrane as a helical segment. Residues 186–198 (THLNGRNGLAGWR) are Extracellular-facing. The helical transmembrane segment at 199-219 (WLFIIDFCITLPIAIYGFIFF) threads the bilayer. The Cytoplasmic portion of the chain corresponds to 220-271 (PGLPDQTSAVSKFSMTRYIFNEQELHYARRRLPARDESTRLDWSTIPRVLKR). A helical transmembrane segment spans residues 272–292 (WHWWMFSLVWVLGGENLGFAS). Residues 293-312 (NSTFALWLQNQKYTLAQRNN) lie on the Extracellular side of the membrane. Residues 313 to 333 (YPSGIFAVGIVSTLCSAVYMS) form a helical membrane-spanning segment. At 334-342 (KIPRARHWH) the chain is on the cytoplasmic side. The helical transmembrane segment at 343 to 363 (VSVFISLVMVIVAVLIRADPL) threads the bilayer. Over 364 to 372 (NPKVVFSAQ) the chain is Extracellular. A helical membrane pass occupies residues 373-393 (YLGGVAYAGQAVFFSWANIIC). The Cytoplasmic segment spans residues 394–401 (HADLQERA). A helical membrane pass occupies residues 402-422 (IVLASMNMFSGAVNAWWSILF). Topologically, residues 423-434 (FASDMVPKFERG) are extracellular. The helical transmembrane segment at 435-455 (CYALLATAISSGIVSVVIRSL) threads the bilayer. Residues 456–512 (QIKENLSKKQVPYIDANDMPGEDDDDDNQDNENDGDDESMEVELHNEEMAEISNPFR) are Cytoplasmic-facing. The disordered stretch occupies residues 468–512 (YIDANDMPGEDDDDDNQDNENDGDDESMEVELHNEEMAEISNPFR). Acidic residues predominate over residues 475 to 496 (PGEDDDDDNQDNENDGDDESME).

Belongs to the major facilitator superfamily. Allantoate permease family.

It is found in the cell membrane. Transports pantothenate into the cell. Also involved in the catabolite repression-mediated regulation of ergosterol biosynthesis and in fenpropimorph resistance. The sequence is that of Pantothenate transporter FEN2 (FEN2) from Saccharomyces cerevisiae (strain ATCC 204508 / S288c) (Baker's yeast).